The sequence spans 471 residues: Phosphatidylserine synthase 1 (471 aa).

The residue at position 2 (A2) is an N-acetylalanine. Over 2-35 (ASCVGSRTLSKDDVNYRMHFRMINEQQVEDITID) the chain is Cytoplasmic. The helical transmembrane segment at 36–56 (FFYRPHTITLLSFTIVSLMYF) threads the bilayer. Over 57–72 (AFTRDDSVPEDNIWRG) the chain is Lumenal. A helical membrane pass occupies residues 73 to 93 (ILSVIFFFLIISVLAFPNGPF). Topologically, residues 94 to 102 (TRPHPALWR) are cytoplasmic. Residues 103 to 123 (MVFGLSVLYFLFLVFLLFLNF) form a helical membrane-spanning segment. The Lumenal segment spans residues 124–160 (EQVKSLMYWLDPNLRYATREADIMEYAVNCHVITWER). Residues 161 to 181 (IVSHFDIFAFGHFWGWAMKAL) form a helical membrane-spanning segment. The Cytoplasmic portion of the chain corresponds to 182-186 (LIRSY). A helical transmembrane segment spans residues 187–207 (GLCWTISITWELTELFFMHLL). The Lumenal segment spans residues 208 to 216 (PNFAECWWD). A helical membrane pass occupies residues 217 to 237 (QVILDILLCNGGGIWLGMVVC). Residues 238–286 (RFLEMRTYHWASFKDIHTTTGKIKRAVLQFTPASWTYVRWFDPKSSFQR) lie on the Cytoplasmic side of the membrane. The chain crosses the membrane as a helical span at residues 287 to 307 (VAGVYLFMIIWQLTELNTFFL). Over 308–309 (KH) the chain is Lumenal. The chain crosses the membrane as a helical span at residues 310–330 (IFVFQASHPLSWCRILFIGCI). Over 331 to 355 (TAPTVRQYYAYLTDTQCKRVGTQCW) the chain is Cytoplasmic. Residues 356–376 (VFGVIGFLEAIVCIKFGQDLF) form a helical membrane-spanning segment. The Lumenal portion of the chain corresponds to 377-380 (SKTQ). Residues 381–401 (ILYVVFWLLCVAFTTFLCLYG) traverse the membrane as a helical segment. At 402–471 (MVWYAEHYGH…SKVTNGVGKK (70 aa)) the chain is on the cytoplasmic side. 3 positions are modified to phosphoserine: S417, S440, and S452. Residues 426 to 471 (ISWHHGKGSKGSEDSPPKHSSNNESHSSRRRNRHSKSKVTNGVGKK) are disordered. Basic residues predominate over residues 453-462 (SRRRNRHSKS).

The protein belongs to the phosphatidyl serine synthase family.

It localises to the endoplasmic reticulum membrane. It carries out the reaction a 1,2-diacyl-sn-glycero-3-phosphoethanolamine + L-serine = a 1,2-diacyl-sn-glycero-3-phospho-L-serine + ethanolamine. It catalyses the reaction a 1,2-diacyl-sn-glycero-3-phosphocholine + L-serine = a 1,2-diacyl-sn-glycero-3-phospho-L-serine + choline. It functions in the pathway phospholipid metabolism; phosphatidylserine biosynthesis. Inhibited by exogenous phosphatidylserine. Its function is as follows. Catalyzes a base-exchange reaction in which the polar head group of phosphatidylethanolamine (PE) or phosphatidylcholine (PC) is replaced by L-serine. Catalyzes mainly the conversion of phosphatidylcholine. Also converts, in vitro and to a lesser extent, phosphatidylethanolamine. In Cricetulus griseus (Chinese hamster), this protein is Phosphatidylserine synthase 1 (PTDSS1).